Here is a 357-residue protein sequence, read N- to C-terminus: Nitronate monooxygenase npaC (357 aa).

Positions 167, 172, and 206 each coordinate FMN.

Belongs to the nitronate monooxygenase family. NMO class I subfamily. FMN serves as cofactor.

In terms of biological role, nitronate monooxygenase; part of the gene cluster that mediates the biosynthesis of the deadly neurotoxic nitroalkane 3-nitropropanoic acid (3-NPA) that acts as an antimetabolite of succinate and irreversibly inhibits succinate dehydrogenase and disrupts mitochondrial oxidative phosphorylation. Catalyzes the oxidation of 3-NPA to nitrite and malonic semialdehyde. NpaC is not conserved in all fungal npa clusters and, while it is possible that it serves as a self-protection mechanism against accumulation of 3-NPA (by npaA and npaB) in the producing host, the more likely scenario may be the three enzymes representing an alternative catabolic pathway of aspartate to generate readily metabolizable nitrogen and carbon sources. The sequence is that of Nitronate monooxygenase npaC from Metarhizium robertsii (strain ARSEF 23 / ATCC MYA-3075) (Metarhizium anisopliae (strain ARSEF 23)).